Consider the following 110-residue polypeptide: uncharacterized protein (110 aa).

It belongs to the HesB/IscA family.

This is an uncharacterized protein from Rickettsia prowazekii (strain Madrid E).